Reading from the N-terminus, the 223-residue chain is Family of serine hydrolases 2 (223 aa).

Residues S110, D174, and H203 each act as charge relay system in the active site.

The protein belongs to the AB hydrolase 3 family.

The protein localises to the cytoplasm. Functionally, serine hydrolase of unknown specificity. This is Family of serine hydrolases 2 (FSH2) from Saccharomyces cerevisiae (strain ATCC 204508 / S288c) (Baker's yeast).